The primary structure comprises 879 residues: Leucine--tRNA ligase (879 aa).

A 'HIGH' region motif is present at residues 45–55 (PYPSGALHMGH). The 'KMSKS' region signature appears at 637 to 641 (KMSKS). ATP is bound at residue K640.

It belongs to the class-I aminoacyl-tRNA synthetase family.

Its subcellular location is the cytoplasm. It carries out the reaction tRNA(Leu) + L-leucine + ATP = L-leucyl-tRNA(Leu) + AMP + diphosphate. The chain is Leucine--tRNA ligase from Xylella fastidiosa (strain 9a5c).